A 412-amino-acid chain; its full sequence is FAD-dependent monooxygenase nscC (412 aa).

An N-terminal signal peptide occupies residues 1–21; the sequence is MAKPQATVLIIGAGISGLTTS. Positions 35 and 46 each coordinate FAD. Residue Asn92 is glycosylated (N-linked (GlcNAc...) asparagine). Residue Arg119 participates in FAD binding. Residues Asn170 and Asn231 are each glycosylated (N-linked (GlcNAc...) asparagine). Positions 326 and 339 each coordinate FAD.

The protein belongs to the paxM FAD-dependent monooxygenase family. It depends on FAD as a cofactor.

Its pathway is secondary metabolite biosynthesis. Functionally, FAD-dependent monooxygenase; part of the gene cluster that mediates the biosynthesis of neosartoricin B, a prenylated anthracenone that probably exhibits T-cell antiproliferative activity, suggestive of a physiological role as an immunosuppressive agent. The non-reducing polyketide synthase nscA probably synthesizes and cyclizes the decaketide backbone. The hydrolase nscB then mediates the product release through hydrolysis followed by spontaneous decarboxylation. The prenyltransferase nscD catalyzes the addition of the dimethylallyl group to the aromatic C5. The FAD-dependent monooxygenase nscC is then responsible for the stereospecific hydroxylation at C2. Neosartoricin B can be converted into two additional compounds neosartoricins C and D. Neosartoricin C is a spirocyclic compound that is cyclized through the attack of C3 hydroxyl on C14, followed by dehydration. On the other hand, neosartoricin D is a further cyclized compound in which attack of C2 on C14 in neosartoricin C results in the formation of the acetal-containing dioxabicyclo-octanone ring. Both of these compounds are novel and possibly represent related metabolites of the gene cluster. The protein is FAD-dependent monooxygenase nscC of Arthroderma otae (strain ATCC MYA-4605 / CBS 113480) (Microsporum canis).